Consider the following 142-residue polypeptide: Midkine (142 aa).

A signal peptide spans 1–21 (MQPRGLLLLLALLLLAAAAEA). Disulfide bonds link Cys-36/Cys-60, Cys-44/Cys-69, Cys-51/Cys-73, Cys-83/Cys-115, and Cys-93/Cys-125.

Belongs to the pleiotrophin family.

Its subcellular location is the cell surface. It is found in the secreted. The protein resides in the extracellular space. The protein localises to the extracellular matrix. It localises to the basement membrane. Its function is as follows. Has mitogenic activity, and neurite extension activity for PC12 cells. In Gallus gallus (Chicken), this protein is Midkine (RIHB).